The following is a 639-amino-acid chain: MGKIIGIDLGTTNSCVAVLDGGKARVLENAEGDRTTPSIIAYTDDETIVGSPAKRQAVTNPTNTFFAIKRLIGRRFKDDEVQRDVNIMPFKIIAADNGDAWVESRGNKMAPPQVSAEILKKMKKTAEDFLGEEVTEAVITVPAYFNDSQRQATKDAGRIAGLDVKRIINEPTAAALAYGIDKKQGDNIVAVYDLGGGTFDISIIEIDSNDGDQTFEVLATNGDTHLGGEDFDNRLINYLADEFKKEQGLDLRKDPLAMQRLKEAAEKAKIELSSTNHTEVNLPYITADATGPKHLVIKITRAKLESLVEDLILRTLEPLKVALADADLSVTDINEVILVGGQTRMPKVQEAVTNFFGKEPRKDVNPDEAVAVGAAIQAGVLSGDVKDVLLLDVTPLSLGIETMGSVMTKLIEKNTTIPTKAQQVFSTADDNQSAVTIHVLQGERKQASANKSLGQFNLDGIEPAQRGQPQIEVMFDIDADGILHVSATDKKTGKKQNITIKASSGLSEEEVAQMVRDAEAHADEDKKFEELVQSRNQADGLVHATKKQVEEAGDALPSEDKEKIQAAMDAVDTAIKGNDKEAIEKATQELIEASAKLMEIAQAKSQAQGGDNADAGKQANATADDVVDAEFEEVKDDKK.

At Thr198 the chain carries Phosphothreonine; by autocatalysis. A disordered region spans residues 602–639 (QAKSQAQGGDNADAGKQANATADDVVDAEFEEVKDDKK). Residues 625-639 (DVVDAEFEEVKDDKK) show a composition bias toward acidic residues.

This sequence belongs to the heat shock protein 70 family.

Acts as a chaperone. The chain is Chaperone protein DnaK from Shewanella baltica (strain OS155 / ATCC BAA-1091).